The sequence spans 692 residues: Elongation factor G (692 aa).

Residues 8 to 282 (ENTRNIGIMA…AVIDYLPSPL (275 aa)) enclose the tr-type G domain. Residues 17–24 (AHIDAGKT), 81–85 (DTPGH), and 135–138 (NKMD) each bind GTP.

It belongs to the TRAFAC class translation factor GTPase superfamily. Classic translation factor GTPase family. EF-G/EF-2 subfamily.

The protein resides in the cytoplasm. Catalyzes the GTP-dependent ribosomal translocation step during translation elongation. During this step, the ribosome changes from the pre-translocational (PRE) to the post-translocational (POST) state as the newly formed A-site-bound peptidyl-tRNA and P-site-bound deacylated tRNA move to the P and E sites, respectively. Catalyzes the coordinated movement of the two tRNA molecules, the mRNA and conformational changes in the ribosome. This chain is Elongation factor G, found in Bacillus cytotoxicus (strain DSM 22905 / CIP 110041 / 391-98 / NVH 391-98).